Reading from the N-terminus, the 845-residue chain is Envelope glycoprotein gp160 (845 aa).

The signal sequence occupies residues methionine 1–glutamine 28. Topologically, residues asparagine 29 to isoleucine 673 are extracellular. Cysteine 50 and cysteine 70 are oxidised to a cystine. N-linked (GlcNAc...) asparagine; by host glycans are attached at residues asparagine 84, asparagine 126, asparagine 132, asparagine 133, asparagine 136, asparagine 149, asparagine 153, asparagine 179, asparagine 180, asparagine 190, asparagine 223, asparagine 227, asparagine 234, asparagine 255, asparagine 269, asparagine 286, asparagine 294, asparagine 324, asparagine 331, and asparagine 347. Intrachain disulfides connect cysteine 115–cysteine 198, cysteine 122–cysteine 189, cysteine 127–cysteine 150, cysteine 211–cysteine 240, and cysteine 221–cysteine 232. Positions cysteine 127–asparagine 149 are V1. A V2 region spans residues cysteine 150–cysteine 189. The interval cysteine 289 to histidine 322 is V3. Cysteines 289 and 323 form a disulfide. The CD4-binding loop stretch occupies residues asparagine 355 to histidine 365. 2 cysteine pairs are disulfide-bonded: cysteine 369–cysteine 434 and cysteine 376–cysteine 407. The segment at cysteine 376 to cysteine 407 is V4. N-linked (GlcNAc...) asparagine; by host glycans are attached at residues asparagine 377, asparagine 383, asparagine 391, asparagine 395, asparagine 402, asparagine 437, asparagine 449, and asparagine 454. V5 stretches follow at residues alanine 450–glycine 460 and alanine 452–glycine 460. The fusion peptide stretch occupies residues alanine 501–alanine 521. The tract at residues lysine 563 to leucine 581 is immunosuppression. Cysteine 587 and cysteine 593 are joined by a disulfide. Asparagine 600, asparagine 605, asparagine 614, and asparagine 626 each carry an N-linked (GlcNAc...) asparagine; by host glycan. A coiled-coil region spans residues lysine 622–alanine 656. The MPER; binding to GalCer stretch occupies residues alanine 651–lysine 672. A helical membrane pass occupies residues phenylalanine 674 to valine 694. Residues asparagine 695 to leucine 845 lie on the Cytoplasmic side of the membrane. A YXXL motif; contains endocytosis signal motif is present at residues tyrosine 701–leucine 704. A disordered region spans residues threonine 708–arginine 731. Residues leucine 844 to leucine 845 carry the Di-leucine internalization motif motif.

Belongs to the HIV-1 env protein family. In terms of assembly, the mature envelope protein (Env) consists of a homotrimer of non-covalently associated gp120-gp41 heterodimers. The resulting complex protrudes from the virus surface as a spike. There seems to be as few as 10 spikes on the average virion. Interacts with host CD4, CCR5 and CXCR4. Gp120 also interacts with the C-type lectins CD209/DC-SIGN and CLEC4M/DC-SIGNR (collectively referred to as DC-SIGN(R)). Gp120 and gp41 interact with GalCer. Gp120 interacts with host ITGA4/ITGB7 complex; on CD4+ T-cells, this interaction results in rapid activation of integrin ITGAL/LFA-1, which facilitates efficient cell-to-cell spreading of HIV-1. Gp120 interacts with cell-associated heparan sulfate; this interaction increases virus infectivity on permissive cells and may be involved in infection of CD4- cells. The mature envelope protein (Env) consists of a homotrimer of non-covalently associated gp120-gp41 heterodimers. The resulting complex protrudes from the virus surface as a spike. There seems to be as few as 10 spikes on the average virion. Post-translationally, highly glycosylated by host. The high number of glycan on the protein is reffered to as 'glycan shield' because it contributes to hide protein sequence from adaptive immune system. In terms of processing, palmitoylation of the transmembrane protein and of Env polyprotein (prior to its proteolytic cleavage) is essential for their association with host cell membrane lipid rafts. Palmitoylation is therefore required for envelope trafficking to classical lipid rafts, but not for viral replication. Specific enzymatic cleavages in vivo yield mature proteins. Envelope glycoproteins are synthesized as an inactive precursor that is heavily N-glycosylated and processed likely by host cell furin in the Golgi to yield the mature SU and TM proteins. The cleavage site between SU and TM requires the minimal sequence [KR]-X-[KR]-R. About 2 of the 9 disulfide bonds of gp41 are reduced by P4HB/PDI, following binding to CD4 receptor.

It localises to the virion membrane. The protein localises to the host cell membrane. The protein resides in the host endosome membrane. In terms of biological role, oligomerizes in the host endoplasmic reticulum into predominantly trimers. In a second time, gp160 transits in the host Golgi, where glycosylation is completed. The precursor is then proteolytically cleaved in the trans-Golgi and thereby activated by cellular furin or furin-like proteases to produce gp120 and gp41. Functionally, attaches the virus to the host lymphoid cell by binding to the primary receptor CD4. This interaction induces a structural rearrangement creating a high affinity binding site for a chemokine coreceptor like CXCR4 and/or CCR5. Acts as a ligand for CD209/DC-SIGN and CLEC4M/DC-SIGNR, which are respectively found on dendritic cells (DCs), and on endothelial cells of liver sinusoids and lymph node sinuses. These interactions allow capture of viral particles at mucosal surfaces by these cells and subsequent transmission to permissive cells. HIV subverts the migration properties of dendritic cells to gain access to CD4+ T-cells in lymph nodes. Virus transmission to permissive T-cells occurs either in trans (without DCs infection, through viral capture and transmission), or in cis (following DCs productive infection, through the usual CD4-gp120 interaction), thereby inducing a robust infection. In trans infection, bound virions remain infectious over days and it is proposed that they are not degraded, but protected in non-lysosomal acidic organelles within the DCs close to the cell membrane thus contributing to the viral infectious potential during DCs' migration from the periphery to the lymphoid tissues. On arrival at lymphoid tissues, intact virions recycle back to DCs' cell surface allowing virus transmission to CD4+ T-cells. Acts as a class I viral fusion protein. Under the current model, the protein has at least 3 conformational states: pre-fusion native state, pre-hairpin intermediate state, and post-fusion hairpin state. During fusion of viral and target intracellular membranes, the coiled coil regions (heptad repeats) assume a trimer-of-hairpins structure, positioning the fusion peptide in close proximity to the C-terminal region of the ectodomain. The formation of this structure appears to drive apposition and subsequent fusion of viral and target cell membranes. Complete fusion occurs in host cell endosomes and is dynamin-dependent, however some lipid transfer might occur at the plasma membrane. The virus undergoes clathrin-dependent internalization long before endosomal fusion, thus minimizing the surface exposure of conserved viral epitopes during fusion and reducing the efficacy of inhibitors targeting these epitopes. Membranes fusion leads to delivery of the nucleocapsid into the cytoplasm. This Homo sapiens (Human) protein is Envelope glycoprotein gp160.